The primary structure comprises 141 residues: MRHGKAGRKLNRTASHRKAMFANMAASLIEHEQIVTTLPKAKEIRPIVEKLVTLGKRGDLHARRQAISQIRDVAVVSKLFDAIASRYATRNGGYLRIMKAGFRQGDNAPLAVIEFVDRDVDAKGAKDRARVAAEAEAAEAA.

It belongs to the bacterial ribosomal protein bL17 family. In terms of assembly, part of the 50S ribosomal subunit. Contacts protein L32.

This is Large ribosomal subunit protein bL17 from Sinorhizobium fredii (strain NBRC 101917 / NGR234).